The following is a 264-amino-acid chain: [LysW]-aminoadipate/[LysW]-glutamate kinase (264 aa).

Substrate contacts are provided by residues 35 to 36, Arg62, and Asn167; that span reads GG.

The protein belongs to the acetylglutamate kinase family. LysZ subfamily.

The protein localises to the cytoplasm. The enzyme catalyses [amino-group carrier protein]-C-terminal-N-(1,4-dicarboxybutan-1-yl)-L-glutamine + ATP = [amino-group carrier protein]-C-terminal-N-(1-carboxy-5-phosphooxy-5-oxopentan-1-yl)-L-glutamine + ADP. It catalyses the reaction [amino-group carrier protein]-C-terminal-gamma-(L-glutamyl)-L-glutamate + ATP = [amino-group carrier protein]-C-terminal-gamma-(5-phospho-L-glutamyl)-L-glutamate + ADP. It participates in amino-acid biosynthesis; L-lysine biosynthesis via AAA pathway; L-lysine from L-alpha-aminoadipate (Thermus route): step 2/5. The protein operates within amino-acid biosynthesis; L-arginine biosynthesis. Its function is as follows. Involved in both the arginine and lysine biosynthetic pathways. Phosphorylates the LysW-bound precursors glutamate (for arginine biosynthesis), respectively alpha-aminoadipate (for lysine biosynthesis). The protein is [LysW]-aminoadipate/[LysW]-glutamate kinase of Saccharolobus islandicus (strain Y.N.15.51 / Yellowstone #2) (Sulfolobus islandicus).